A 203-amino-acid chain; its full sequence is Recombination protein RecR (203 aa).

A C4-type zinc finger spans residues 56–71; sequence CAVCGNVSDDERCRIC. The Toprim domain occupies 79-179; it reads SVVCVVEEPK…TVTRIASGLP (101 aa).

This sequence belongs to the RecR family.

Its function is as follows. May play a role in DNA repair. It seems to be involved in an RecBC-independent recombinational process of DNA repair. It may act with RecF and RecO. The chain is Recombination protein RecR from Mycobacterium avium (strain 104).